A 113-amino-acid polypeptide reads, in one-letter code: UPF0122 protein PEPE_0845 (113 aa).

It belongs to the UPF0122 family.

Might take part in the signal recognition particle (SRP) pathway. This is inferred from the conservation of its genetic proximity to ftsY/ffh. May be a regulatory protein. The chain is UPF0122 protein PEPE_0845 from Pediococcus pentosaceus (strain ATCC 25745 / CCUG 21536 / LMG 10740 / 183-1w).